The sequence spans 267 residues: Chaperone protein MyfB (267 aa).

Residues 1 to 34 form the signal peptide; that stretch reads MKYKFSHNFISYNLFLFVFMSLILLPYSHASSMG. The cysteines at positions 127 and 164 are disulfide-linked.

It belongs to the periplasmic pilus chaperone family.

Its subcellular location is the periplasm. Its function is as follows. Required for the biogenesis of the MyfA fimbria. The sequence is that of Chaperone protein MyfB (myfB) from Yersinia enterocolitica.